The chain runs to 26 residues: Morintide mO4 (26 aa).

One can recognise a Chitin-binding type-1 domain in the interval 1–26; sequence NRLCCSQYGFCGTTSEYCSRVSGCQS. A disulfide bridge links Cys-4 with Cys-18.

Seeds (at protein level).

Its function is as follows. Chitin-binding protein which functions in defense against chitin-containing fungal pathogens. The sequence is that of Morintide mO4 from Moringa oleifera (Horseradish tree).